Consider the following 173-residue polypeptide: Mesencephalic astrocyte-derived neurotrophic factor homolog (173 aa).

Positions 1–22 (MKTTHLVLVLCFLAGVAQTTLA) are cleaved as a signal peptide. Disulfide bonds link cysteine 28–cysteine 114, cysteine 31–cysteine 103, cysteine 61–cysteine 72, and cysteine 148–cysteine 151.

Belongs to the ARMET family.

It localises to the secreted. Its function is as follows. Required during the maturation of the embryonic nervous system for maintenance of neuronal and cuticular connectivity. Essential for maintenance of dopaminergic neurons and dopamine levels. The chain is Mesencephalic astrocyte-derived neurotrophic factor homolog from Drosophila persimilis (Fruit fly).